The primary structure comprises 185 residues: MELVVQSRETDKKSVIKKIRQQGGIPAVLYSGGKSLANIVVDARVFSKFLSTLESGALASTVFTLSYEGREIKALVKDIQYHVTTYDVIHLDFEELVDGRDVRLNVPIRCINTVDCVGVKLGGSLRQVIRCIRVVCKPKDIVPFLELDVQSLGLSQTLKLSDICIPEGIRPVTSLKEVAVTVARR.

This sequence belongs to the bacterial ribosomal protein bL25 family. CTC subfamily. In terms of assembly, part of the 50S ribosomal subunit; part of the 5S rRNA/L5/L18/L25 subcomplex. Contacts the 5S rRNA. Binds to the 5S rRNA independently of L5 and L18.

In terms of biological role, this is one of the proteins that binds to the 5S RNA in the ribosome where it forms part of the central protuberance. The polypeptide is Large ribosomal subunit protein bL25 (Chlamydia trachomatis serovar L2 (strain ATCC VR-902B / DSM 19102 / 434/Bu)).